Here is a 525-residue protein sequence, read N- to C-terminus: Apolipoprotein N-acyltransferase 2 (525 aa).

The next 6 helical transmembrane spans lie at 25 to 45 (ILNF…YYAL), 56 to 76 (FLYG…LAFF), 81 to 101 (IFTL…FGFL), 115 to 135 (FFFA…FLAY), 153 to 173 (FVDI…AACL), and 200 to 220 (LIFT…ILSI). The 259-residue stretch at 228–486 (LNTVIVQQNT…AESVYTEVPV (259 aa)) folds into the CN hydrolase domain. Residue Glu-274 is the Proton acceptor of the active site. The active site involves Lys-339. Cys-397 functions as the Nucleophile in the catalytic mechanism. Residues 495 to 515 (ASYKDWLPIMMFLILIFNIFL) form a helical membrane-spanning segment.

This sequence belongs to the CN hydrolase family. Apolipoprotein N-acyltransferase subfamily.

The protein localises to the cell inner membrane. It catalyses the reaction N-terminal S-1,2-diacyl-sn-glyceryl-L-cysteinyl-[lipoprotein] + a glycerophospholipid = N-acyl-S-1,2-diacyl-sn-glyceryl-L-cysteinyl-[lipoprotein] + a 2-acyl-sn-glycero-3-phospholipid + H(+). It participates in protein modification; lipoprotein biosynthesis (N-acyl transfer). Its function is as follows. Catalyzes the phospholipid dependent N-acylation of the N-terminal cysteine of apolipoprotein, the last step in lipoprotein maturation. This is Apolipoprotein N-acyltransferase 2 from Treponema denticola (strain ATCC 35405 / DSM 14222 / CIP 103919 / JCM 8153 / KCTC 15104).